Reading from the N-terminus, the 61-residue chain is Small ribosomal subunit protein uS14B (61 aa).

Residues Cys24, Cys27, Cys40, and Cys43 each contribute to the Zn(2+) site.

Belongs to the universal ribosomal protein uS14 family. Zinc-binding uS14 subfamily. As to quaternary structure, part of the 30S ribosomal subunit. Contacts proteins S3 and S10. Zn(2+) serves as cofactor.

In terms of biological role, binds 16S rRNA, required for the assembly of 30S particles and may also be responsible for determining the conformation of the 16S rRNA at the A site. The chain is Small ribosomal subunit protein uS14B from Nocardia farcinica (strain IFM 10152).